The chain runs to 192 residues: Large ribosomal subunit protein uL6 (192 aa).

Belongs to the universal ribosomal protein uL6 family. As to quaternary structure, part of the 50S ribosomal subunit.

Its function is as follows. This protein binds to the 23S rRNA, and is important in its secondary structure. It is located near the subunit interface in the base of the L7/L12 stalk, and near the tRNA binding site of the peptidyltransferase center. In Nanoarchaeum equitans (strain Kin4-M), this protein is Large ribosomal subunit protein uL6.